A 367-amino-acid polypeptide reads, in one-letter code: rRNA processing protein RCL1 (367 aa).

Residue S2 is modified to N-acetylserine.

Belongs to the RNA 3'-terminal cyclase family. Type 2 subfamily. As to quaternary structure, interacts directly with BMS1 and the U3 snoRNA to form a stable subcomplex. Component of the 90S small subunit processome also known as 90S pre-ribosome that consists of the 35S pre-rRNA, early-associating ribosomal proteins most of which are part of the small ribosomal subunit, the U3 snoRNA and associated proteins.

It localises to the nucleus. The protein localises to the nucleolus. Its function is as follows. Does not have cyclase activity. Plays a role in 40S-ribosomal-subunit biogenesis in the early pre-rRNA processing steps at sites A0, A1 and A2 that are required for proper maturation of the 18S RNA. RCL1 activates BMS1 by promoting GDP/GTP exchange. The polypeptide is rRNA processing protein RCL1 (RCL1) (Saccharomyces cerevisiae (strain ATCC 204508 / S288c) (Baker's yeast)).